The chain runs to 1342 residues: DNA-directed RNA polymerase subunit beta (1342 aa).

The protein belongs to the RNA polymerase beta chain family. As to quaternary structure, the RNAP catalytic core consists of 2 alpha, 1 beta, 1 beta' and 1 omega subunit. When a sigma factor is associated with the core the holoenzyme is formed, which can initiate transcription.

The enzyme catalyses RNA(n) + a ribonucleoside 5'-triphosphate = RNA(n+1) + diphosphate. In terms of biological role, DNA-dependent RNA polymerase catalyzes the transcription of DNA into RNA using the four ribonucleoside triphosphates as substrates. The chain is DNA-directed RNA polymerase subunit beta from Proteus mirabilis (strain HI4320).